We begin with the raw amino-acid sequence, 126 residues long: MADLAKIVEDLSSLTVLEAAELSKLLEEKWGVSAAAPVAVAAAGGAAGAAAPVEEEKTEFDVILTDAGANKINVIKEVRAITGLGLKEAKDLVEGAPKAVKEAVSKAEAADLKKKLEDAGAKVDVK.

It belongs to the bacterial ribosomal protein bL12 family. Homodimer. Part of the ribosomal stalk of the 50S ribosomal subunit. Forms a multimeric L10(L12)X complex, where L10 forms an elongated spine to which 2 to 4 L12 dimers bind in a sequential fashion. Binds GTP-bound translation factors.

Its function is as follows. Forms part of the ribosomal stalk which helps the ribosome interact with GTP-bound translation factors. Is thus essential for accurate translation. The protein is Large ribosomal subunit protein bL12 of Rhizobium meliloti (strain 1021) (Ensifer meliloti).